Consider the following 234-residue polypeptide: Glutathione S-transferase sirG (234 aa).

The GST N-terminal domain occupies 15–99 (LYVVKATPTS…YLTDAYDHEG (85 aa)). The 126-residue stretch at 105-230 (DLWERTQVNN…KALSQKFRPS (126 aa)) folds into the GST C-terminal domain.

The protein belongs to the GST superfamily.

It catalyses the reaction RX + glutathione = an S-substituted glutathione + a halide anion + H(+). The protein operates within mycotoxin biosynthesis. Functionally, glutathione S-transferase; part of the gene cluster that mediates the biosynthesis of sirodesmin PL, an epipolythiodioxopiperazine (ETP) characterized by a disulfide bridged cyclic dipeptide and that acts as a phytotoxin which is involved in the blackleg didease of canola. SirD catalyzes the O-prenylation of L-tyrosine (L-Tyr) in the presence of dimethylallyl diphosphate (DMAPP) to yield 4-O-dimethylallyl-L-Tyr, and therefore represents probably the first pathway-specific enzyme in the biosynthesis of sirodesmin PL. 4-O-dimethylallyl-L-Tyr, then undergoes condensation with L-Ser in a reaction catalyzed by the non-ribosomal peptide synthase sirP to form the diketopiperazine (DKP) backbone. Further bishydroxylation of the DKP performed by the cytochrome P450 monooxygenase sirC leads to the production of the intermediate phomamide. This step is essential to form the reactive thiol group required for toxicity of sirodesmin PL. The next steps of sirodesmin biosynthesis are not well understood yet, but some predictions could be made from intermediate compounds identification. Phomamide is converted into phomalizarine via oxidation, probably by sirT. Further oxidation, methylation (by sirM or sirN) and reduction steps convert phomalizarine to deacetyl sirodesmin. Finally, acetyltransferase sirH probably acetylates deacetyl sirodesmin to produce sirodesmin PL. In Leptosphaeria maculans (Blackleg fungus), this protein is Glutathione S-transferase sirG.